The chain runs to 591 residues: L-fucose isomerase (591 aa).

Active-site proton acceptor residues include glutamate 337 and aspartate 361. The Mn(2+) site is built by glutamate 337, aspartate 361, and histidine 528.

It belongs to the L-fucose isomerase family. As to quaternary structure, homohexamer. Mn(2+) serves as cofactor.

It localises to the cytoplasm. The enzyme catalyses L-fucose = L-fuculose. It carries out the reaction D-arabinose = D-ribulose. It catalyses the reaction L-xylopyranose = L-xylulose. It participates in carbohydrate degradation; L-fucose degradation; L-lactaldehyde and glycerone phosphate from L-fucose: step 1/3. Inhibited by ribitol, L-arabitol and dulcitol. Isomerization of L-xylulose to L-xylose is inhibited by xylitol. Functionally, converts the aldose L-fucose into the corresponding ketose L-fuculose. Also converts D-arabinose into D-ribulose. In addition, catalyzes the isomerization of L-xylulose to L-xylose. This Escherichia coli (strain K12) protein is L-fucose isomerase.